A 284-amino-acid chain; its full sequence is Probable ADP-ribose 1''-phosphate phosphatase YML087W (284 aa).

Residues D23, Q55, N80, and D90 each contribute to the substrate site. The Macro domain occupies 34–230 (ESIPHAYIQN…HISKELKNVL (197 aa)). Residues N80 and D90 contribute to the active site. A disulfide bond links C128 and C136. H145 is an active-site residue. The substrate site is built by T148 and T195.

In terms of assembly, homodimer.

The enzyme catalyses ADP-alpha-D-ribose 1''-phosphate + H2O = ADP-D-ribose + phosphate. Its function is as follows. Highly specific phosphatase involved in the metabolism of ADP-ribose 1''-phosphate (Appr1p) which is produced as a consequence of tRNA splicing. + phosphate. The sequence is that of Probable ADP-ribose 1''-phosphate phosphatase YML087W from Saccharomyces cerevisiae (strain ATCC 204508 / S288c) (Baker's yeast).